The sequence spans 319 residues: Glucokinase (319 aa).

ATP is bound at residue 8-13 (GDIGGT).

Belongs to the bacterial glucokinase family.

It is found in the cytoplasm. The catalysed reaction is D-glucose + ATP = D-glucose 6-phosphate + ADP + H(+). This is Glucokinase from Chromohalobacter salexigens (strain ATCC BAA-138 / DSM 3043 / CIP 106854 / NCIMB 13768 / 1H11).